The chain runs to 424 residues: MFALADVNSFYASCEKVFRPDLRDRSVVVLSNNDGCVIPRSAEAKKLGIKMGVPWFQLRSAKFPEPVIAFSSNYALYASMSNRVMVHLEELAPRVEQYSIDEMFLDIRGIDSCIDFEDFGRQLREHVRSGTGLTIGVGMGPTKTLAKSAQWASKEWSQFGGVLALTLHNQKRTEKLLSLQPVEEIWGVGRRISKKLNTMGITTALQLARANPTFIRKNFNVVLERTVRELNGESCISLEEAPPPKQQIVCSRSFGERVTTYEAMRQAVCQHAERAAEKLRGERQFCRHIAVFVKTSPFAVTEPYYGNLASEKLLIPTQDTRDIIAAAVRALDRIWVDGHRYAKAGCMLNDFTPTGVSQLNLFDEVQPRERSEQLMQVLDGINHPGKGKIWFAGRGIAPEWQMKRELLSPAYTTRWADIPAAKLT.

A UmuC domain is found at 2–189 (FALADVNSFY…QPVEEIWGVG (188 aa)).

This sequence belongs to the DNA polymerase type-Y family.

In terms of biological role, involved in UV protection and mutation. This is Protein SamB (samB) from Salmonella typhimurium.